Reading from the N-terminus, the 422-residue chain is 4-hydroxy-3-methylbut-2-en-1-yl diphosphate synthase (flavodoxin) (422 aa).

Cys-316, Cys-319, Cys-362, and Glu-369 together coordinate [4Fe-4S] cluster.

Belongs to the IspG family. Requires [4Fe-4S] cluster as cofactor.

The enzyme catalyses (2E)-4-hydroxy-3-methylbut-2-enyl diphosphate + oxidized [flavodoxin] + H2O + 2 H(+) = 2-C-methyl-D-erythritol 2,4-cyclic diphosphate + reduced [flavodoxin]. The protein operates within isoprenoid biosynthesis; isopentenyl diphosphate biosynthesis via DXP pathway; isopentenyl diphosphate from 1-deoxy-D-xylulose 5-phosphate: step 5/6. Converts 2C-methyl-D-erythritol 2,4-cyclodiphosphate (ME-2,4cPP) into 1-hydroxy-2-methyl-2-(E)-butenyl 4-diphosphate. This is 4-hydroxy-3-methylbut-2-en-1-yl diphosphate synthase (flavodoxin) from Ehrlichia canis (strain Jake).